A 118-amino-acid chain; its full sequence is V-type proton ATPase subunit G 2 (118 aa).

The tract at residues 23 to 90 (ADARKRKARR…VQGMQSSQQR (68 aa)) is disordered. Residues 35–55 (QAKEEAQMEVEQYRREREQEF) show a composition bias toward basic and acidic residues. 2 stretches are compositionally biased toward polar residues: residues 56–69 (QSKQQAAMGSQGNL) and 78–89 (RRQVQGMQSSQQ).

It belongs to the V-ATPase G subunit family. In terms of assembly, V-ATPase is a heteromultimeric enzyme made up of two complexes: the ATP-hydrolytic V1 complex and the proton translocation V0 complex. The V1 complex consists of three catalytic AB heterodimers that form a heterohexamer, three peripheral stalks each consisting of EG heterodimers, one central rotor including subunits D and F, and the regulatory subunits C and H. The proton translocation complex V0 consists of the proton transport subunit a, a ring of proteolipid subunits c9c'', rotary subunit d, subunits e and f, and the accessory subunits ATP6AP1/Ac45 and ATP6AP2/PRR.

Its subcellular location is the melanosome. The protein localises to the cytoplasmic vesicle. The protein resides in the clathrin-coated vesicle membrane. Subunit of the V1 complex of vacuolar(H+)-ATPase (V-ATPase), a multisubunit enzyme composed of a peripheral complex (V1) that hydrolyzes ATP and a membrane integral complex (V0) that translocates protons. V-ATPase is responsible for acidifying and maintaining the pH of intracellular compartments and in some cell types, is targeted to the plasma membrane, where it is responsible for acidifying the extracellular environment. This chain is V-type proton ATPase subunit G 2 (ATP6V1G2), found in Macaca mulatta (Rhesus macaque).